The chain runs to 219 residues: Thiamine-phosphate synthase (219 aa).

4-amino-2-methyl-5-(diphosphooxymethyl)pyrimidine contacts are provided by residues 44–48 (QLREK) and Asn79. Residues Asp80 and Asp99 each coordinate Mg(2+). Ser117 serves as a coordination point for 4-amino-2-methyl-5-(diphosphooxymethyl)pyrimidine. A 2-[(2R,5Z)-2-carboxy-4-methylthiazol-5(2H)-ylidene]ethyl phosphate-binding site is contributed by 143–145 (TST). Lys146 contributes to the 4-amino-2-methyl-5-(diphosphooxymethyl)pyrimidine binding site. 2-[(2R,5Z)-2-carboxy-4-methylthiazol-5(2H)-ylidene]ethyl phosphate contacts are provided by residues Gly175 and 195 to 196 (IS).

This sequence belongs to the thiamine-phosphate synthase family. It depends on Mg(2+) as a cofactor.

The enzyme catalyses 2-[(2R,5Z)-2-carboxy-4-methylthiazol-5(2H)-ylidene]ethyl phosphate + 4-amino-2-methyl-5-(diphosphooxymethyl)pyrimidine + 2 H(+) = thiamine phosphate + CO2 + diphosphate. It catalyses the reaction 2-(2-carboxy-4-methylthiazol-5-yl)ethyl phosphate + 4-amino-2-methyl-5-(diphosphooxymethyl)pyrimidine + 2 H(+) = thiamine phosphate + CO2 + diphosphate. It carries out the reaction 4-methyl-5-(2-phosphooxyethyl)-thiazole + 4-amino-2-methyl-5-(diphosphooxymethyl)pyrimidine + H(+) = thiamine phosphate + diphosphate. The protein operates within cofactor biosynthesis; thiamine diphosphate biosynthesis; thiamine phosphate from 4-amino-2-methyl-5-diphosphomethylpyrimidine and 4-methyl-5-(2-phosphoethyl)-thiazole: step 1/1. Its function is as follows. Condenses 4-methyl-5-(beta-hydroxyethyl)thiazole monophosphate (THZ-P) and 2-methyl-4-amino-5-hydroxymethyl pyrimidine pyrophosphate (HMP-PP) to form thiamine monophosphate (TMP). In Bacillus mycoides (strain KBAB4) (Bacillus weihenstephanensis), this protein is Thiamine-phosphate synthase.